The primary structure comprises 173 residues: Photosystem I assembly protein Ycf3 (173 aa).

TPR repeat units lie at residues 35–68 (AFSY…EEDP), 72–105 (SYIL…NFKL), and 120–153 (GVQA…APDN).

Belongs to the Ycf3 family.

Its subcellular location is the plastid. It localises to the chloroplast thylakoid membrane. Essential for the assembly of the photosystem I (PSI) complex. May act as a chaperone-like factor to guide the assembly of the PSI subunits. This chain is Photosystem I assembly protein Ycf3, found in Porphyra purpurea (Red seaweed).